The primary structure comprises 549 residues: Probable protein kinase UbiB (549 aa).

Residues aspartate 123–leucine 501 enclose the Protein kinase domain. ATP is bound by residues leucine 129 to valine 137 and lysine 152. The active-site Proton acceptor is aspartate 287. 2 helical membrane passes run histidine 496–isoleucine 516 and alanine 520–tryptophan 540.

It belongs to the ABC1 family. UbiB subfamily.

It localises to the cell inner membrane. The protein operates within cofactor biosynthesis; ubiquinone biosynthesis [regulation]. In terms of biological role, is probably a protein kinase regulator of UbiI activity which is involved in aerobic coenzyme Q (ubiquinone) biosynthesis. This chain is Probable protein kinase UbiB, found in Shewanella baltica (strain OS223).